A 99-amino-acid polypeptide reads, in one-letter code: Putative membrane protein insertion efficiency factor (99 aa).

The protein belongs to the UPF0161 family.

Its subcellular location is the cell membrane. Its function is as follows. Could be involved in insertion of integral membrane proteins into the membrane. The sequence is that of Putative membrane protein insertion efficiency factor from Levilactobacillus brevis (strain ATCC 367 / BCRC 12310 / CIP 105137 / JCM 1170 / LMG 11437 / NCIMB 947 / NCTC 947) (Lactobacillus brevis).